The primary structure comprises 307 residues: Acyl transferase (307 aa).

Active-site charge relay system residues include Ser-116, Asp-213, and His-243.

The protein belongs to the LuxD family.

It participates in lipid metabolism; fatty acid reduction for biolumincescence. Functionally, acyl transferase is part of the fatty acid reductase system required for aldehyde biosynthesis; it produces fatty acids for the luminescent reaction. The protein is Acyl transferase of Aliivibrio fischeri (Vibrio fischeri).